The following is a 429-amino-acid chain: Cell wall protein ECM33 (429 aa).

Residues 1 to 19 form the signal peptide; the sequence is MQFKNALTATAILSASALA. N-linked (GlcNAc...) asparagine glycans are attached at residues Asn-21, Asn-56, Asn-82, Asn-196, Asn-209, Asn-227, Asn-234, Asn-241, Asn-267, Asn-279, Asn-304, and Asn-328. Residue Ser-339 is modified to Phosphoserine. Residues 361-401 show a composition bias toward low complexity; that stretch reads LSSTSTESSKSSATSSASSSGDASNAQASVSASASSSSSSS. The interval 361–410 is disordered; the sequence is LSSTSTESSKSSATSSASSSGDASNAQASVSASASSSSSSSKKSKGAAPE. Gly-406 carries the GPI-anchor amidated glycine lipid modification. Residues 407 to 429 constitute a propeptide, removed in mature form; it reads AAPELVPATSFMGVVAAVAVALL.

It belongs to the SPS2 family. Post-translationally, the GPI-anchor is attached to the protein in the endoplasmic reticulum and serves to target the protein to the cell surface. There, the glucosamine-inositol phospholipid moiety is cleaved off and the GPI-modified mannoprotein is covalently attached via its lipidless GPI glycan remnant to the 1,6-beta-glucan of the outer cell wall layer.

The protein resides in the cell membrane. It localises to the secreted. Its subcellular location is the cell wall. Functionally, required for proper cell wall integrity and for the correct assembly of the mannoprotein outer layer of the cell wall. Important for apical bud growth. This chain is Cell wall protein ECM33 (ECM33), found in Saccharomyces cerevisiae (strain YJM789) (Baker's yeast).